A 214-amino-acid polypeptide reads, in one-letter code: MNYPHPIIAREGWPFIAIAAVVALLIHAVGGFGFAWPFWLLLVFVVQFFRDPQRPIPAQPNAVLCPADGRIVAVETAQDPYANREALKISVFMNVFNVHSQRSPVDGAISKVEYFPGAFLNAAIDKASTENERNAVVIQTASGKTVTSVQIAGLIARRILCYVRAGEPLSRGQRYGFIRFGSRVDVYLPLGSRAKVSIGEKVYASSTILAELEQ.

S182 serves as the catalytic Schiff-base intermediate with substrate; via pyruvic acid. Residue S182 is modified to Pyruvic acid (Ser); by autocatalysis.

Belongs to the phosphatidylserine decarboxylase family. PSD-A subfamily. Heterodimer of a large membrane-associated beta subunit and a small pyruvoyl-containing alpha subunit. The cofactor is pyruvate. Is synthesized initially as an inactive proenzyme. Formation of the active enzyme involves a self-maturation process in which the active site pyruvoyl group is generated from an internal serine residue via an autocatalytic post-translational modification. Two non-identical subunits are generated from the proenzyme in this reaction, and the pyruvate is formed at the N-terminus of the alpha chain, which is derived from the carboxyl end of the proenzyme. The post-translation cleavage follows an unusual pathway, termed non-hydrolytic serinolysis, in which the side chain hydroxyl group of the serine supplies its oxygen atom to form the C-terminus of the beta chain, while the remainder of the serine residue undergoes an oxidative deamination to produce ammonia and the pyruvoyl prosthetic group on the alpha chain.

Its subcellular location is the cell membrane. The catalysed reaction is a 1,2-diacyl-sn-glycero-3-phospho-L-serine + H(+) = a 1,2-diacyl-sn-glycero-3-phosphoethanolamine + CO2. It participates in phospholipid metabolism; phosphatidylethanolamine biosynthesis; phosphatidylethanolamine from CDP-diacylglycerol: step 2/2. Catalyzes the formation of phosphatidylethanolamine (PtdEtn) from phosphatidylserine (PtdSer). The polypeptide is Phosphatidylserine decarboxylase proenzyme (Burkholderia cenocepacia (strain HI2424)).